The primary structure comprises 333 residues: MSQPPVAVLGAGSWGTALAMHLARQGHRVRLWGRDPEAMAAMAEANCNTRYLPDAPFPPGLEPTADLDAALRESSCWLVVVPSQAFREMLQKLAPYRDDARVLVWATKGLEEHSGQWLHQVVAEEMGVNFPCAVISGPSFAKEVARGLPTALTVASTTPGVAERVAEWFHGERMRVYLSDDVLGVQLGGAFKNVLAIAAGISDGLGFGANARAALITRGLAELMRLGDAAGARRETLMGLSGLGDLVLTCTDDQSRNRRLGLALGRGESLDAALAAIGQAVEGARTARMAVSKAAELGVDMPICHQVHRVLYVGHSAIEAVGELLGRDQKPEF.

4 residues coordinate NADPH: serine 13, tryptophan 14, arginine 34, and lysine 108. Residues lysine 108, glycine 137, and serine 139 each contribute to the sn-glycerol 3-phosphate site. Alanine 141 contacts NADPH. Sn-glycerol 3-phosphate is bound by residues lysine 192, aspartate 245, serine 255, arginine 256, and asparagine 257. Residue lysine 192 is the Proton acceptor of the active site. Arginine 256 serves as a coordination point for NADPH. Glutamate 282 lines the NADPH pocket.

Belongs to the NAD-dependent glycerol-3-phosphate dehydrogenase family.

Its subcellular location is the cytoplasm. The catalysed reaction is sn-glycerol 3-phosphate + NAD(+) = dihydroxyacetone phosphate + NADH + H(+). The enzyme catalyses sn-glycerol 3-phosphate + NADP(+) = dihydroxyacetone phosphate + NADPH + H(+). Its pathway is membrane lipid metabolism; glycerophospholipid metabolism. In terms of biological role, catalyzes the reduction of the glycolytic intermediate dihydroxyacetone phosphate (DHAP) to sn-glycerol 3-phosphate (G3P), the key precursor for phospholipid synthesis. The protein is Glycerol-3-phosphate dehydrogenase [NAD(P)+] of Thioalkalivibrio sulfidiphilus (strain HL-EbGR7).